A 168-amino-acid chain; its full sequence is HTH-type transcriptional regulator IscR (168 aa).

One can recognise an HTH rrf2-type domain in the interval 2 to 131 (KLTSKGRYAV…NNITLGELMK (130 aa)). The segment at residues 28-51 (LADISERQGISLSYLEQLFSKLRK) is a DNA-binding region (H-T-H motif). Residues Cys92, Cys98, and Cys104 each contribute to the [2Fe-2S] cluster site.

[2Fe-2S] cluster serves as cofactor.

Functionally, regulates the transcription of several operons and genes involved in the biogenesis of Fe-S clusters and Fe-S-containing proteins. In Vibrio campbellii (strain ATCC BAA-1116), this protein is HTH-type transcriptional regulator IscR.